The primary structure comprises 513 residues: Arabinoxylan arabinofuranohydrolase (513 aa).

The N-terminal stretch at 1–26 is a signal peptide; it reads MRKKCSVCLWILVLLLSCLSGKSAYA. Residue Asp-50 is the Proton acceptor of the active site. Glu-251 (proton donor) is an active-site residue. Residue Asn-314 coordinates substrate. Positions 382–511 constitute a CBM6 domain; sequence NRVEAETFAW…LFNFDYWQFT (130 aa). Ca(2+)-binding residues include Glu-385, Glu-387, Asn-409, Gln-410, and Asp-506.

The protein resides in the secreted. The catalysed reaction is Hydrolysis of terminal non-reducing alpha-L-arabinofuranoside residues in alpha-L-arabinosides.. It functions in the pathway glycan degradation; xylan degradation. Functionally, cleaves arabinose units from O-2- or O-3-monosubstituted xylose residues, thereby assisting in arabinoxylan (AX) and short-chain arabinoxylo-oligosaccharide (AXOS) degradation. Is more active on wheat bran AXOS than on wheat water-extractable AX and rye water-extractable AX. Does not display endoxylanase, xylosidase or arabinanase activity. The chain is Arabinoxylan arabinofuranohydrolase (xynD) from Bacillus subtilis (strain 168).